Here is a 356-residue protein sequence, read N- to C-terminus: Glutamine synthetase N-1 (356 aa).

Residues Val19 to Gly99 enclose the GS beta-grasp domain. Residues Lys106–Pro356 enclose the GS catalytic domain.

The protein belongs to the glutamine synthetase family. As to quaternary structure, homooctamer. In terms of tissue distribution, this is a nodule isozyme.

It is found in the cytoplasm. The enzyme catalyses L-glutamate + NH4(+) + ATP = L-glutamine + ADP + phosphate + H(+). The chain is Glutamine synthetase N-1 (Gln-gamma) from Phaseolus vulgaris (Kidney bean).